The chain runs to 471 residues: Glutamate--tRNA ligase (471 aa).

The 'HIGH' region motif lies at 9-19 (PSPTGYLHVGG). Residues cysteine 98, cysteine 100, cysteine 125, and aspartate 127 each contribute to the Zn(2+) site. Positions 237-241 (KLSKR) match the 'KMSKS' region motif. Lysine 240 lines the ATP pocket.

This sequence belongs to the class-I aminoacyl-tRNA synthetase family. Glutamate--tRNA ligase type 1 subfamily. Monomer. Zn(2+) serves as cofactor.

It is found in the cytoplasm. It carries out the reaction tRNA(Glu) + L-glutamate + ATP = L-glutamyl-tRNA(Glu) + AMP + diphosphate. Catalyzes the attachment of glutamate to tRNA(Glu) in a two-step reaction: glutamate is first activated by ATP to form Glu-AMP and then transferred to the acceptor end of tRNA(Glu). The protein is Glutamate--tRNA ligase of Yersinia enterocolitica serotype O:8 / biotype 1B (strain NCTC 13174 / 8081).